The primary structure comprises 538 residues: Phosphoenolpyruvate carboxykinase (ATP) (538 aa).

Arg-64 provides a ligand contact to substrate. ATP is bound at residue Arg-152. Residues Tyr-205 and Lys-211 each contribute to the substrate site. ATP-binding positions include Lys-211, His-230, and 246 to 254 (GLSGTGKTT). Residues Lys-211 and His-230 each coordinate Mn(2+). Asp-267 contributes to the Mn(2+) binding site. ATP contacts are provided by residues Glu-295, Arg-331, Arg-344, 447 to 448 (RI), and Thr-453. Position 331 (Arg-331) interacts with substrate.

Belongs to the phosphoenolpyruvate carboxykinase (ATP) family. In terms of assembly, monomer. Mn(2+) is required as a cofactor.

It localises to the cytoplasm. The enzyme catalyses oxaloacetate + ATP = phosphoenolpyruvate + ADP + CO2. The protein operates within carbohydrate biosynthesis; gluconeogenesis. Its function is as follows. Involved in gluconeogenesis. Catalyzes the conversion of oxaloacetate (OAA) to phosphoenolpyruvate (PEP) through direct phosphoryl transfer between the nucleoside triphosphate and OAA. This is Phosphoenolpyruvate carboxykinase (ATP) from Actinobacillus succinogenes (strain ATCC 55618 / DSM 22257 / CCUG 43843 / 130Z).